Reading from the N-terminus, the 466-residue chain is Argininosuccinate lyase (466 aa).

3 residues coordinate 2-(N(omega)-L-arginino)succinate: Ser-27, Asn-114, and Thr-159. Residue His-160 is the Proton acceptor of the active site. Ser-281 serves as the catalytic Proton donor. 2-(N(omega)-L-arginino)succinate contacts are provided by Asn-289, Tyr-321, Gln-326, and Lys-329.

This sequence belongs to the lyase 1 family. Argininosuccinate lyase subfamily. Homotetramer. As to expression, eye lens.

It catalyses the reaction 2-(N(omega)-L-arginino)succinate = fumarate + L-arginine. It participates in amino-acid biosynthesis; L-arginine biosynthesis; L-arginine from L-ornithine and carbamoyl phosphate: step 3/3. Delta crystallin, the principal crystallin in embryonic lens, is found only in birds and reptiles. This protein also functions as an enzymatically active argininosuccinate lyase. This Anser anser anser (Western greylag goose) protein is Argininosuccinate lyase (ASL).